The chain runs to 424 residues: GTPase Obg (424 aa).

Positions methionine 1–leucine 159 constitute an Obg domain. In terms of domain architecture, OBG-type G spans alanine 160–serine 330. GTP is bound by residues glycine 166–serine 173, phenylalanine 191–threonine 195, aspartate 212–glycine 215, asparagine 282–aspartate 285, and serine 311–leucine 313. Mg(2+) contacts are provided by serine 173 and threonine 193. One can recognise an OCT domain in the interval asparagine 347 to glutamate 424.

The protein belongs to the TRAFAC class OBG-HflX-like GTPase superfamily. OBG GTPase family. Monomer. The cofactor is Mg(2+).

The protein resides in the cytoplasm. Its function is as follows. An essential GTPase which binds GTP, GDP and possibly (p)ppGpp with moderate affinity, with high nucleotide exchange rates and a fairly low GTP hydrolysis rate. Plays a role in control of the cell cycle, stress response, ribosome biogenesis and in those bacteria that undergo differentiation, in morphogenesis control. This is GTPase Obg from Caldanaerobacter subterraneus subsp. tengcongensis (strain DSM 15242 / JCM 11007 / NBRC 100824 / MB4) (Thermoanaerobacter tengcongensis).